Reading from the N-terminus, the 897-residue chain is Interference hedgehog (897 aa).

A signal peptide spans 1–26 (MSVTRGHKSTPSLLLLFLSVLTSLLA). The Extracellular portion of the chain corresponds to 27–702 (AIPVLQANAP…THNETFNMNP (676 aa)). Ig-like C2-type domains are found at residues 40-147 (PGVR…ATIS), 148-235 (GDKI…RRLE), 244-336 (PSAA…YIQL), and 342-429 (PRIV…LQVN). Cystine bridges form between cysteine 63–cysteine 125, cysteine 169–cysteine 217, and cysteine 272–cysteine 320. 2 N-linked (GlcNAc...) asparagine glycosylation sites follow: asparagine 96 and asparagine 99. Residues asparagine 296, asparagine 351, asparagine 393, and asparagine 467 are each glycosylated (N-linked (GlcNAc...) asparagine). A disulfide bond links cysteine 363 and cysteine 411. The interval 434 to 468 (QAGDGMGTGGMGRSSNRNAHNRKQKQMVPPSAPNV) is disordered. Fibronectin type-III domains are found at residues 462-571 (PPSA…LQRG) and 579-674 (VPEL…TQRP). Heparin contacts are provided by arginine 498, lysine 504, and lysine 506. An N-linked (GlcNAc...) asparagine glycan is attached at asparagine 530. Position 545 (arginine 545) interacts with heparin. Asparagine 561 carries an N-linked (GlcNAc...) asparagine glycan. Positions 666-682 (LKQGRTQRPRSSTTAQP) are enriched in polar residues. The disordered stretch occupies residues 666–694 (LKQGRTQRPRSSTTAQPTMHTVDTTTPTH). A compositionally biased stretch (low complexity) spans 683-694 (TMHTVDTTTPTH). N-linked (GlcNAc...) asparagine glycosylation is present at asparagine 695. The chain crosses the membrane as a helical span at residues 703-723 (LLTGTISGGALLILLVISACL). Over 724–897 (CLCKRRHSRG…SSGSLNSVGV (174 aa)) the chain is Cytoplasmic. Disordered stretches follow at residues 773-793 (AQQQ…DSQD) and 819-849 (MSSS…NLNQ). The segment covering 774–784 (QQQQQQLQQQH) has biased composition (low complexity).

The protein belongs to the immunoglobulin superfamily. IHOG family. As to quaternary structure, homodimer. Heterotetramer; 2 iHog chains bind 2 hh chains when facilitated by heparin, heparin is required to promote high-affinity interactions between hh and iHog.

The protein localises to the membrane. In terms of biological role, mediates response to the active Hedgehog (Hh) protein signal in embryos, functioning upstream or at the level of patched (ptc). The polypeptide is Interference hedgehog (Drosophila mojavensis (Fruit fly)).